A 444-amino-acid chain; its full sequence is Xaa-Pro dipeptidase (444 aa).

Positions 247, 258, 340, 385, and 424 each coordinate Mn(2+).

The protein belongs to the peptidase M24B family. Bacterial-type prolidase subfamily. Mn(2+) is required as a cofactor.

The catalysed reaction is Xaa-L-Pro dipeptide + H2O = an L-alpha-amino acid + L-proline. Functionally, splits dipeptides with a prolyl residue in the C-terminal position. The chain is Xaa-Pro dipeptidase from Photorhabdus laumondii subsp. laumondii (strain DSM 15139 / CIP 105565 / TT01) (Photorhabdus luminescens subsp. laumondii).